Here is a 442-residue protein sequence, read N- to C-terminus: tRNA-2-methylthio-N(6)-dimethylallyladenosine synthase (442 aa).

Residues 6-122 (RKFYIHTFGC…LPVLIAEAGK (117 aa)) enclose the MTTase N-terminal domain. [4Fe-4S] cluster-binding residues include Cys15, Cys51, Cys85, Cys157, Cys161, and Cys164. The 231-residue stretch at 143–373 (RTQSLTAFVP…IDLQNGISAE (231 aa)) folds into the Radical SAM core domain. Residues 376–439 (RLAIGSVVEV…SATLIGRAAE (64 aa)) form the TRAM domain.

It belongs to the methylthiotransferase family. MiaB subfamily. Monomer. [4Fe-4S] cluster is required as a cofactor.

It is found in the cytoplasm. It catalyses the reaction N(6)-dimethylallyladenosine(37) in tRNA + (sulfur carrier)-SH + AH2 + 2 S-adenosyl-L-methionine = 2-methylsulfanyl-N(6)-dimethylallyladenosine(37) in tRNA + (sulfur carrier)-H + 5'-deoxyadenosine + L-methionine + A + S-adenosyl-L-homocysteine + 2 H(+). In terms of biological role, catalyzes the methylthiolation of N6-(dimethylallyl)adenosine (i(6)A), leading to the formation of 2-methylthio-N6-(dimethylallyl)adenosine (ms(2)i(6)A) at position 37 in tRNAs that read codons beginning with uridine. The protein is tRNA-2-methylthio-N(6)-dimethylallyladenosine synthase of Chlorobium limicola (strain DSM 245 / NBRC 103803 / 6330).